Here is an 88-residue protein sequence, read N- to C-terminus: Prolevitide (88 aa).

A signal peptide spans 1-20 (MYKGIFLCVLFAVICANSLA). Pyrrolidone carboxylic acid is present on Gln-74. Glutamine amide is present on Gln-87.

It belongs to the gastrin/cholecystokinin family. In terms of tissue distribution, expressed by the skin glands.

The protein resides in the secreted. This Xenopus laevis (African clawed frog) protein is Prolevitide.